The sequence spans 125 residues: Putative glutaredoxin-C2 (125 aa).

A Glutaredoxin domain is found at 2–103; the sequence is AERVARLSSQ…PLLREAGALW (102 aa). Cysteine 22 and cysteine 25 form a disulfide bridge.

The protein belongs to the glutaredoxin family. CC-type subfamily.

The protein resides in the cytoplasm. Has a glutathione-disulfide oxidoreductase activity in the presence of NADPH and glutathione reductase. Reduces low molecular weight disulfides and proteins. The sequence is that of Putative glutaredoxin-C2 (GRXC2) from Oryza sativa subsp. japonica (Rice).